A 446-amino-acid chain; its full sequence is MAVTECEWASLGSRIGLRAALVLLSGSLLVVLFPLSGLEHQYRTALNILLQCNLWGGDDRHTFTGQTRGLAVASTAIELLVLKQKPTSDVKFEAKAALNQALEMKRQGKKEKAHKLLHHALKMDPDHVDALNELGILLEEEKDIIQADYLYSKALTISPHNEKALINRDRTLPLVEEIDQRYFSLIDSKVKKLMSIPKGNPALRRVMEESYYHHIYHTVAIEGNTLSLSEIRHIIETRYAVPGKSLEEQNEVIGMHAAMKYVNATLVSRIGSVTIDNILEIHRRILGYVDPVEAGRFRRNQVFVGHHIPPHPRDVEKLMQEFVQWLNSEEAMSLHPVEFAALAHYKLVYIHPFVDGNGRTSRLLMNLILMQAGYPPITVRKEQRSEYYHVLEIANEGDVRPFIRFIAKCTESTLDLLLIATAEHPVGLPEPNHGFSECKQTITIKT.

Over 1-18 (MAVTECEWASLGSRIGLR) the chain is Cytoplasmic. The chain crosses the membrane as a helical; Signal-anchor for type II membrane protein span at residues 19 to 39 (AALVLLSGSLLVVLFPLSGLE). The Lumenal portion of the chain corresponds to 40–446 (HQYRTALNIL…ECKQTITIKT (407 aa)). 2 TPR repeats span residues 94 to 127 (AKAA…DPDH) and 128 to 161 (VDAL…SPHN). Residues 218-223 (TVAIEG) carry the Inhibitory (S/T)XXXE(G/N) motif motif. Position 222 (Glu222) interacts with ATP. The N-linked (GlcNAc...) asparagine glycan is linked to Asn263. Residues 273–408 (VTIDNILEIH…VRPFIRFIAK (136 aa)) form the Fido domain. 304 to 307 (VGHH) contributes to the ATP binding site. The active site involves His351. ATP is bound by residues 355 to 362 (DGNGRTSR), 387 to 388 (YY), and Asn395.

This sequence belongs to the fic family. Homodimer. The cofactor is Mg(2+). Requires Mn(2+) as cofactor.

It is found in the endoplasmic reticulum membrane. It catalyses the reaction L-tyrosyl-[protein] + ATP = O-(5'-adenylyl)-L-tyrosyl-[protein] + diphosphate. The catalysed reaction is 3-O-(5'-adenylyl)-L-threonyl-[protein] + H2O = L-threonyl-[protein] + AMP + H(+). It carries out the reaction L-threonyl-[protein] + ATP = 3-O-(5'-adenylyl)-L-threonyl-[protein] + diphosphate. The side chain of Glu-222 determines which of the two opposing activities (AMPylase or de-AMPylase) will take place. In response to endoplasmic reticulum stress, mediates de-AMPylase activity. Adenylyltransferase activity is inhibited by the inhibitory helix present at the N-terminus: Glu-222 binds ATP and competes with ATP-binding at Arg-362, thereby preventing adenylyltransferase activity. In unstressed cells, disengagement of Glu-222 promotes adenylyltransferase activity. Activation dissociates ATP-binding from Glu-222, allowing ordered binding of the entire ATP moiety with the alpha-phosphate in an orientation that is productive for accepting an incoming target hydroxyl side chain. Its function is as follows. Protein that can both mediate the addition of adenosine 5'-monophosphate (AMP) to specific residues of target proteins (AMPylation), and the removal of the same modification from target proteins (de-AMPylation), depending on the context. The side chain of Glu-222 determines which of the two opposing activities (AMPylase or de-AMPylase) will take place. Acts as a key regulator of the ERN1/IRE1-mediated unfolded protein response (UPR) by mediating AMPylation or de-AMPylation of HSPA5/BiP. In unstressed cells, acts as an adenylyltransferase by mediating AMPylation of HSPA5/BiP at 'Thr-518', thereby inactivating it. In response to endoplasmic reticulum stress, acts as a phosphodiesterase by mediating removal of ATP (de-AMPylation) from HSPA5/BiP at 'Thr-518', leading to restore HSPA5/BiP activity. The chain is Protein adenylyltransferase FICD from Xenopus tropicalis (Western clawed frog).